A 427-amino-acid chain; its full sequence is Inward rectifier potassium channel 2 (427 aa).

Over Met1–Trp81 the chain is Cytoplasmic. A helical membrane pass occupies residues Arg82 to Ile106. Residues Ala107–Ser128 lie on the Extracellular side of the membrane. Residues Phe129–Gln140 constitute an intramembrane region (helical; Pore-forming). Positions Thr141–Phe147 form an intramembrane region, pore-forming. The short motif at Thr142–Phe147 is the Selectivity filter element. Residues Arg148–Ile156 lie on the Extracellular side of the membrane. A helical membrane pass occupies residues Ala157–Ala178. Residues Val179 to Ile427 are Cytoplasmic-facing. The polyphosphoinositide (PIP2)-binding stretch occupies residues Ala181–Leu208. Residues Glu386–Ile427 are disordered. The PDZ-binding motif lies at Ser425–Ile427.

This sequence belongs to the inward rectifier-type potassium channel (TC 1.A.2.1) family. KCNJ2 subfamily. Homotetramer. Homomultimeric and heteromultimeric association with KCNJ4/Kir2.3, resulting in an enhanced G-protein-induced current. Associates, via its PDZ-recognition domain, with a complex containing LIN7A, LIN7B, LIN7C, DLG1, CASK and APBA1. Found in the apical basilar papilla of the inner ear, brain, muscle, cerebellum, heart and liver.

It localises to the cell membrane. The protein localises to the sarcolemma. It is found in the T-tubule. The catalysed reaction is K(+)(in) = K(+)(out). With respect to regulation, activated by phosphatidylinositol 4,5 biphosphate (PtdIns(4,5)P2). Inward rectifier potassium channels are characterized by a greater tendency to allow potassium to flow into the cell rather than out of it. Their voltage dependence is regulated by the concentration of extracellular potassium; as external potassium is raised, the voltage range of the channel opening shifts to more positive voltages. The inward rectification is mainly due to the blockage of outward current by internal magnesium. Can be blocked by external barium. Probably participates in establishing action potential waveform and excitability of neuronal and muscle tissues. The sequence is that of Inward rectifier potassium channel 2 (KCNJ2) from Gallus gallus (Chicken).